Reading from the N-terminus, the 290-residue chain is PIH1 domain-containing protein 1 (290 aa).

Positions 34-50 (ELQQAQTSRPESTQIQP) are enriched in polar residues. Residues 34–53 (ELQQAQTSRPESTQIQPQPG) form a disordered region. S173 carries the phosphoserine modification.

This sequence belongs to the PIH1 family. Component of the R2TP complex composed at least of RUVBL1, RUVBL2, RPAP3 and PIHD1. Component of the PAQosome complex which is responsible for the biogenesis of several protein complexes and which consists of R2TP complex members RUVBL1, RUVBL2, RPAP3 and PIH1D1, URI complex members PFDN2, PFDN6, PDRG1, UXT and URI1 as well as ASDURF, POLR2E and DNAAF10/WDR92. Interacts with phosphorylated TELO2 and mediates interaction of TELO2 with the R2TP complex. Interacts with phosphorylated ECD, EFTUD2/SNRP116, RPB1 and UBR5 and with RPB1 in a phosphorylation-independent manner. Interacts with the core C/D box snoRNP particle components NOP58 and FBL and with RUVBL1/TIP49. Interacts with RPAP3 and DNAAF10. Interacts with histone H4 and with SWI/SNF complex member SMARCB1/SNF5. Interacts with the mTORC1 complex member RPTOR. Interacts with MSL1.

The protein resides in the nucleus. Involved in the assembly of C/D box small nucleolar ribonucleoprotein (snoRNP) particles. Recruits the SWI/SNF complex to the core promoter of rRNA genes and enhances pre-rRNA transcription. Mediates interaction of TELO2 with the R2TP complex which is necessary for the stability of MTOR and SMG1. Positively regulates the assembly and activity of the mTORC1 complex. The protein is PIH1 domain-containing protein 1 (PIH1D1) of Bos taurus (Bovine).